The primary structure comprises 427 residues: Phosphatidate cytidylyltransferase, mitochondrial (427 aa).

The span at 94 to 106 (YNRNGDGSTSTEN) shows a compositional bias: polar residues. The segment at 94-113 (YNRNGDGSTSTENPSKKEEQ) is disordered.

It belongs to the TAM41 family. It depends on Mg(2+) as a cofactor.

It is found in the mitochondrion inner membrane. The catalysed reaction is a 1,2-diacyl-sn-glycero-3-phosphate + CTP + H(+) = a CDP-1,2-diacyl-sn-glycerol + diphosphate. The protein operates within phospholipid metabolism; CDP-diacylglycerol biosynthesis; CDP-diacylglycerol from sn-glycerol 3-phosphate: step 3/3. In terms of biological role, catalyzes the formation of CDP-diacylglycerol (CDP-DAG) from phosphatidic acid (PA) in the mitochondrial inner membrane. Required for the biosynthesis of the dimeric phospholipid cardiolipin, which stabilizes supercomplexes of the mitochondrial respiratory chain in the mitochondrial inner membrane. The polypeptide is Phosphatidate cytidylyltransferase, mitochondrial (Dictyostelium discoideum (Social amoeba)).